The chain runs to 198 residues: Golgi to ER traffic protein 1 (198 aa).

Topologically, residues 1 to 6 are lumenal; that stretch reads MDPFSI. A helical transmembrane segment spans residues 7–26; sequence LLTLTLIILAQNAVRIVGKS. Topologically, residues 27–110 are cytoplasmic; it reads QIHQSIWNLY…AIEKYLGLAI (84 aa). Positions 73-106 form a coiled coil; it reads KWTKLNRKYDQLQTEIKAVSDQVSQQQQAIEKYL. The chain crosses the membrane as a helical span at residues 111 to 131; it reads SVTTTLPLWLFRFKYRKQPLF. Over 132-155 the chain is Lumenal; sequence YFPKDTFPSYLEWILSFPSVPQGS. Residues 156 to 172 form a helical membrane-spanning segment; sequence IGIMFWILLLNKFVSNL. Residues 173-198 lie on the Cytoplasmic side of the membrane; that stretch reads EFIVKTFSTKVEKPVPIVKVEDLSPK.

The protein belongs to the WRB/GET1 family. As to quaternary structure, component of the Golgi to ER traffic (GET) complex, which is composed of GET1, GET2 and GET3. Within the complex, GET1 and GET2 form a heterotetramer which is stabilized by phosphatidylinositol binding and which binds to the GET3 homodimer.

The protein localises to the endoplasmic reticulum membrane. It localises to the golgi apparatus membrane. Required for the post-translational delivery of tail-anchored (TA) proteins to the endoplasmic reticulum. Together with GET2, acts as a membrane receptor for soluble GET3, which recognizes and selectively binds the transmembrane domain of TA proteins in the cytosol. The GET complex cooperates with the HDEL receptor ERD2 to mediate the ATP-dependent retrieval of resident ER proteins that contain a C-terminal H-D-E-L retention signal from the Golgi to the ER. The chain is Golgi to ER traffic protein 1 from Komagataella phaffii (strain GS115 / ATCC 20864) (Yeast).